Consider the following 554-residue polypeptide: Glutamine--tRNA ligase (554 aa).

Positions 34 to 44 match the 'HIGH' region motif; sequence PEPNGYLHIGH. ATP contacts are provided by residues 35–37 and 41–47; these read EPN and HIGHAKS. L-glutamine-binding residues include Asp67 and Tyr212. ATP is bound by residues Thr231, 261–262, and 269–271; these read RL and MSK. The 'KMSKS' region motif lies at 268–272; sequence VMSKR. The interval 317–324 is interaction with tRNA; it reads TKQDNTIE.

The protein belongs to the class-I aminoacyl-tRNA synthetase family. As to quaternary structure, monomer.

The protein resides in the cytoplasm. The catalysed reaction is tRNA(Gln) + L-glutamine + ATP = L-glutaminyl-tRNA(Gln) + AMP + diphosphate. This Shigella boydii serotype 18 (strain CDC 3083-94 / BS512) protein is Glutamine--tRNA ligase.